We begin with the raw amino-acid sequence, 451 residues long: tRNA-2-methylthio-N(6)-dimethylallyladenosine synthase (451 aa).

One can recognise an MTTase N-terminal domain in the interval 5-121 (RQYHITTFGC…LQDLLEQVEG (117 aa)). The [4Fe-4S] cluster site is built by Cys14, Cys50, Cys84, Cys156, Cys160, and Cys163. One can recognise a Radical SAM core domain in the interval 142–379 (RDSTVTAWVN…NHLVAQKAAE (238 aa)). Residues 382 to 446 (QRYAGRIEEV…AFSLTGEAVE (65 aa)) enclose the TRAM domain.

The protein belongs to the methylthiotransferase family. MiaB subfamily. As to quaternary structure, monomer. Requires [4Fe-4S] cluster as cofactor.

It localises to the cytoplasm. The catalysed reaction is N(6)-dimethylallyladenosine(37) in tRNA + (sulfur carrier)-SH + AH2 + 2 S-adenosyl-L-methionine = 2-methylsulfanyl-N(6)-dimethylallyladenosine(37) in tRNA + (sulfur carrier)-H + 5'-deoxyadenosine + L-methionine + A + S-adenosyl-L-homocysteine + 2 H(+). Its function is as follows. Catalyzes the methylthiolation of N6-(dimethylallyl)adenosine (i(6)A), leading to the formation of 2-methylthio-N6-(dimethylallyl)adenosine (ms(2)i(6)A) at position 37 in tRNAs that read codons beginning with uridine. The protein is tRNA-2-methylthio-N(6)-dimethylallyladenosine synthase of Picosynechococcus sp. (strain ATCC 27264 / PCC 7002 / PR-6) (Agmenellum quadruplicatum).